The chain runs to 588 residues: MDTPSAAAETSEPSAQWQAYRGAPTGTDIECEGWRQEAALRMLNNNLDPEVAEDPENLVVYGGTGQAARSWDAYDAILDELRTLADAETLLVQSGKPVGVFETHERAPSVLIANSNLVGNWADWEQFHELEAEGKIMYGQMTAGSWAYIGTQGIIQGTFETLAELARDHYPDNDGLRGKIVATAGLGGMGGAQPLAVTMNHGVCIAAEVDEARIDRRIETGYCMERTDDLGEAIERATAAAEAGDPYSVGVHGNAADVLEGMLDRDFVPDVVTDQTSAHDELAGYYPSGYTVADADELRDEDPDAYREASMDTMARHVAAVLAMQDAGAVAFEYGNNIRGQVAAHRGDVTTTAGESHDPFDFPGFVPAYIRPLFCRGKGPFRWVALSGNPADIHRTDRAVTELFPEKDDLHRWIDLAQEHVQFQGLPSRVCWLGYCAADDDLTERARFAVRINELVDNGEIEAPIVVTRDHLDAGSVASPNRETEAMRDGTDAVADWPILNALLNTAAGADIVSVHNGGGVGIGNSLHTNNHVVLDGSDAAAETARRVFTTDPGMGVIRHADAGYADALVEADASGVTVPMRDAEREQ.

Residues 1–15 (MDTPSAAAETSEPSA) show a composition bias toward low complexity. Residues 1 to 22 (MDTPSAAAETSEPSAQWQAYRG) are disordered. NAD(+) contacts are provided by residues 62 to 63 (GG), Gln-140, 188 to 190 (GMG), Glu-208, Arg-213, 254 to 255 (NA), 275 to 279 (QTSAH), and Tyr-334. Cys-431 is a catalytic residue. Residue Gly-520 participates in NAD(+) binding.

Belongs to the urocanase family. The cofactor is NAD(+).

The protein resides in the cytoplasm. It catalyses the reaction 4-imidazolone-5-propanoate = trans-urocanate + H2O. It functions in the pathway amino-acid degradation; L-histidine degradation into L-glutamate; N-formimidoyl-L-glutamate from L-histidine: step 2/3. In terms of biological role, catalyzes the conversion of urocanate to 4-imidazolone-5-propionate. This chain is Probable urocanate hydratase, found in Halobacterium salinarum (strain ATCC 29341 / DSM 671 / R1).